A 697-amino-acid chain; its full sequence is SITS-binding protein (697 aa).

The interval M1–G20 is disordered. Over A2 to K29 the chain is Cytoplasmic. The chain crosses the membrane as a helical span at residues G30 to W50. 6 N-linked (GlcNAc...) asparagine glycosylation sites follow: N112, N134, N162, N386, N405, and N470. The next 2 helical transmembrane spans lie at G503–P521 and W542–G562. N-linked (GlcNAc...) asparagine glycosylation is present at N568.

The protein belongs to the glycosyl hydrolase 31 family. In terms of assembly, homodimer; disulfide-linked. As to expression, electroplax tissue, brain (200-fold less), and heart (500-fold less).

The protein localises to the membrane. Its function is as follows. This glycoprotein is probably not a functional part of the chloride channel. This is SITS-binding protein from Tetronarce californica (Pacific electric ray).